Reading from the N-terminus, the 191-residue chain is Thioredoxin F-type, chloroplastic (191 aa).

A Thioredoxin domain is found at 68–190 (KASLETAVGA…LVAAIEAARS (123 aa)). Residues cysteine 115 and cysteine 118 each act as nucleophile in the active site. Cysteine 115 and cysteine 118 are disulfide-bonded.

This sequence belongs to the thioredoxin family. Plant F-type subfamily. In terms of assembly, forms a complex with heterodimeric ferredoxin-thioredoxin reductase (FTR) and ferredoxin.

It localises to the plastid. The protein localises to the chloroplast. In terms of biological role, participates in various redox reactions through the reversible oxidation of the active center dithiol to a disulfide. The F form is known to activate a number of enzymes of the photosynthetic carbon cycle. The chain is Thioredoxin F-type, chloroplastic from Mesembryanthemum crystallinum (Common ice plant).